We begin with the raw amino-acid sequence, 843 residues long: MPLSYPHFRKLLLLDDEAGLLEEELPRLADEGLNRRVAEDLNLQLPNVSIPWTHKVGNFTGLYSSTVPTFNPDWLTPSFPDIHLHQDLIHKCEQFVGPLTKNELRRLKLVMPSRFFPKVTKYFPMEKGIKPYYPDNVVNHYFKTRHYLHTLWKAGILYKRESTRSASFCGSPYSWEQELQHGSTSINDTKGHGTESLCTQSSGILSRPSAGSSIQGKFQQSRLGLQQKQGQLANGKQGRSGRIRSWVHTPTRWPAGVEPTGTGCAYNIASRSASCFHQSAVREKTNPSLSTSKRHSSTGHAVELNPVPPGSVRSEGKGSVLSCWWLQFRDTEPCSDYCLSHIINLLEDWGPCYEHGQHHIRTPRTPARVTGGVFLVDKNPHNTTESRLVVDFSQFSRGNTRVSWPKFAVPNLQSLTNLLSSNLSWLSLDVSAAFYHLPLHPAAMPHLLVGSSGLSRYVARLSSTSRIHDHQHGTMQNLHNSCSRNLYVSLLLLFKTFGRKLHLYSHPIILGFRKIPMGVGLSPFLLAQFTSAICSVVRRAFPHCLAFSYMDDLVLGAKSVQHLESLYTAVTNFLLSVGIHLNTSKTKRWGYTLNFMGYVIGSWGSLPQDHIVQKIKACFRKLPVNRPIDWKVCQRIVGLLGFAAPFTQCGYPALMPLYACITAKQAFVFSPTYKAFLCQQYMHLYPVARQRPGLCQVFADATPTGWGLAIGHQRMRGTFVAPLPIHTAELLAACFARSRSGAKLIGTDNSVVLSRKYTSFPWLLGCAANWILRGTSFVYVPSALNPADDPSRGRLGLYRPLLRLPFQPTTGRTSLYAASPSVPSHLPDRVHFASPLHVAWRPP.

The tract at residues 1–177 (MPLSYPHFRK…FCGSPYSWEQ (177 aa)) is terminal protein domain (TP). Residues 178-346 (ELQHGSTSIN…YCLSHIINLL (169 aa)) are spacer. 2 disordered regions span residues 180 to 221 (QHGS…FQQS) and 282 to 313 (REKTNPSLSTSKRHSSTGHAVELNPVPPGSVR). A compositionally biased stretch (polar residues) spans 196 to 221 (SLCTQSSGILSRPSAGSSIQGKFQQS). The interval 347–690 (EDWGPCYEHG…YMHLYPVARQ (344 aa)) is polymerase/reverse transcriptase domain (RT). The Reverse transcriptase domain occupies 357–600 (QHHIRTPRTP…YTLNFMGYVI (244 aa)). 3 residues coordinate Mg(2+): Asp429, Asp551, and Asp552.

This sequence belongs to the hepadnaviridae P protein family.

It carries out the reaction DNA(n) + a 2'-deoxyribonucleoside 5'-triphosphate = DNA(n+1) + diphosphate. It catalyses the reaction Endonucleolytic cleavage to 5'-phosphomonoester.. Its activity is regulated as follows. Activated by host HSP70 and HSP40 in vitro to be able to bind the epsilon loop of the pgRNA. Because deletion of the RNase H region renders the protein partly chaperone-independent, the chaperones may be needed indirectly to relieve occlusion of the RNA-binding site by this domain. Inhibited by several reverse-transcriptase inhibitors: Lamivudine, Adefovir and Entecavir. Multifunctional enzyme that converts the viral RNA genome into dsDNA in viral cytoplasmic capsids. This enzyme displays a DNA polymerase activity that can copy either DNA or RNA templates, and a ribonuclease H (RNase H) activity that cleaves the RNA strand of RNA-DNA heteroduplexes in a partially processive 3'- to 5'-endonucleasic mode. Neo-synthesized pregenomic RNA (pgRNA) are encapsidated together with the P protein, and reverse-transcribed inside the nucleocapsid. Initiation of reverse-transcription occurs first by binding the epsilon loop on the pgRNA genome, and is initiated by protein priming, thereby the 5'-end of (-)DNA is covalently linked to P protein. Partial (+)DNA is synthesized from the (-)DNA template and generates the relaxed circular DNA (RC-DNA) genome. After budding and infection, the RC-DNA migrates in the nucleus, and is converted into a plasmid-like covalently closed circular DNA (cccDNA). The activity of P protein does not seem to be necessary for cccDNA generation, and is presumably released from (+)DNA by host nuclear DNA repair machinery. The sequence is that of Protein P from Homo sapiens (Human).